A 658-amino-acid chain; its full sequence is DNA mismatch repair protein MutL (658 aa).

Disordered stretches follow at residues arginine 114–alanine 137 and arginine 437–aspartate 456. The span at proline 442–aspartate 456 shows a compositional bias: polar residues.

The protein belongs to the DNA mismatch repair MutL/HexB family.

Its function is as follows. This protein is involved in the repair of mismatches in DNA. It is required for dam-dependent methyl-directed DNA mismatch repair. May act as a 'molecular matchmaker', a protein that promotes the formation of a stable complex between two or more DNA-binding proteins in an ATP-dependent manner without itself being part of a final effector complex. This chain is DNA mismatch repair protein MutL, found in Neisseria meningitidis serogroup B (strain ATCC BAA-335 / MC58).